A 234-amino-acid polypeptide reads, in one-letter code: Large ribosomal subunit protein uL1c (234 aa).

This sequence belongs to the universal ribosomal protein uL1 family. As to quaternary structure, part of the 50S ribosomal subunit.

Its subcellular location is the plastid. It localises to the chloroplast. Functionally, binds directly to 23S rRNA. Might be involved in E site tRNA release (Potential). The polypeptide is Large ribosomal subunit protein uL1c (rpl1) (Rhodomonas salina (Cryptomonas salina)).